Here is a 315-residue protein sequence, read N- to C-terminus: Probable mannose-6-phosphate isomerase GmuF (315 aa).

Gln95, His97, Glu115, and His172 together coordinate Zn(2+). Residue Arg192 is part of the active site.

The protein belongs to the mannose-6-phosphate isomerase type 1 family. Requires Zn(2+) as cofactor.

It catalyses the reaction D-mannose 6-phosphate = D-fructose 6-phosphate. In terms of biological role, seems to be involved in the degradation of glucomannan. The chain is Probable mannose-6-phosphate isomerase GmuF (gmuF) from Bacillus subtilis (strain 168).